The chain runs to 134 residues: Small ribosomal subunit protein uS8c (134 aa).

Belongs to the universal ribosomal protein uS8 family. Part of the 30S ribosomal subunit.

It is found in the plastid. Its subcellular location is the chloroplast. One of the primary rRNA binding proteins, it binds directly to 16S rRNA central domain where it helps coordinate assembly of the platform of the 30S subunit. In Phaseolus vulgaris (Kidney bean), this protein is Small ribosomal subunit protein uS8c (rps8).